We begin with the raw amino-acid sequence, 80 residues long: Small ribosomal subunit protein uS17 (80 aa).

Belongs to the universal ribosomal protein uS17 family. Part of the 30S ribosomal subunit.

One of the primary rRNA binding proteins, it binds specifically to the 5'-end of 16S ribosomal RNA. The polypeptide is Small ribosomal subunit protein uS17 (Beijerinckia indica subsp. indica (strain ATCC 9039 / DSM 1715 / NCIMB 8712)).